Here is a 379-residue protein sequence, read N- to C-terminus: Succinyl-diaminopimelate desuccinylase (379 aa).

His-68 is a Zn(2+) binding site. Asp-70 is an active-site residue. Residue Asp-101 participates in Zn(2+) binding. Glu-135 functions as the Proton acceptor in the catalytic mechanism. Positions 136, 164, and 350 each coordinate Zn(2+).

Belongs to the peptidase M20A family. DapE subfamily. In terms of assembly, homodimer. The cofactor is Zn(2+). It depends on Co(2+) as a cofactor.

It carries out the reaction N-succinyl-(2S,6S)-2,6-diaminopimelate + H2O = (2S,6S)-2,6-diaminopimelate + succinate. It functions in the pathway amino-acid biosynthesis; L-lysine biosynthesis via DAP pathway; LL-2,6-diaminopimelate from (S)-tetrahydrodipicolinate (succinylase route): step 3/3. Functionally, catalyzes the hydrolysis of N-succinyl-L,L-diaminopimelic acid (SDAP), forming succinate and LL-2,6-diaminopimelate (DAP), an intermediate involved in the bacterial biosynthesis of lysine and meso-diaminopimelic acid, an essential component of bacterial cell walls. This is Succinyl-diaminopimelate desuccinylase from Bordetella pertussis (strain Tohama I / ATCC BAA-589 / NCTC 13251).